A 278-amino-acid chain; its full sequence is Large ribosomal subunit protein uL2c (278 aa).

2 disordered regions span residues S32–G56 and Q203–G256. Positions G209–V220 are enriched in basic residues.

Belongs to the universal ribosomal protein uL2 family. In terms of assembly, part of the 50S ribosomal subunit.

It localises to the plastid. It is found in the chloroplast. This Chara vulgaris (Common stonewort) protein is Large ribosomal subunit protein uL2c (rpl2).